A 324-amino-acid chain; its full sequence is Glyoxylate/hydroxypyruvate reductase B (324 aa).

Residues Arg-237 and Glu-266 contribute to the active site. Residue His-285 is the Proton donor of the active site.

It belongs to the D-isomer specific 2-hydroxyacid dehydrogenase family. GhrB subfamily. Homodimer.

It is found in the cytoplasm. The catalysed reaction is glycolate + NADP(+) = glyoxylate + NADPH + H(+). It catalyses the reaction (R)-glycerate + NAD(+) = 3-hydroxypyruvate + NADH + H(+). The enzyme catalyses (R)-glycerate + NADP(+) = 3-hydroxypyruvate + NADPH + H(+). Catalyzes the NADPH-dependent reduction of glyoxylate and hydroxypyruvate into glycolate and glycerate, respectively. The sequence is that of Glyoxylate/hydroxypyruvate reductase B from Escherichia coli O17:K52:H18 (strain UMN026 / ExPEC).